Here is a 203-residue protein sequence, read N- to C-terminus: A-type ATP synthase subunit E (203 aa).

The protein belongs to the V-ATPase E subunit family. In terms of assembly, has multiple subunits with at least A(3), B(3), C, D, E, F, H, I and proteolipid K(x).

The protein resides in the cell membrane. In terms of biological role, component of the A-type ATP synthase that produces ATP from ADP in the presence of a proton gradient across the membrane. The polypeptide is A-type ATP synthase subunit E (Thermococcus kodakarensis (strain ATCC BAA-918 / JCM 12380 / KOD1) (Pyrococcus kodakaraensis (strain KOD1))).